A 524-amino-acid polypeptide reads, in one-letter code: Probable cytosol aminopeptidase (524 aa).

Positions 288 and 293 each coordinate Mn(2+). Residue lysine 300 is part of the active site. Mn(2+)-binding residues include aspartate 311, aspartate 370, and glutamate 372. Arginine 374 is a catalytic residue.

It belongs to the peptidase M17 family. The cofactor is Mn(2+).

The protein localises to the cytoplasm. It carries out the reaction Release of an N-terminal amino acid, Xaa-|-Yaa-, in which Xaa is preferably Leu, but may be other amino acids including Pro although not Arg or Lys, and Yaa may be Pro. Amino acid amides and methyl esters are also readily hydrolyzed, but rates on arylamides are exceedingly low.. It catalyses the reaction Release of an N-terminal amino acid, preferentially leucine, but not glutamic or aspartic acids.. In terms of biological role, presumably involved in the processing and regular turnover of intracellular proteins. Catalyzes the removal of unsubstituted N-terminal amino acids from various peptides. In Mycobacterium leprae (strain TN), this protein is Probable cytosol aminopeptidase (pepA).